The sequence spans 88 residues: Apolipoprotein C-I (88 aa).

The first 26 residues, 1 to 26 (MRLLLSLPVLLVALSVVLERPAPAQA), serve as a signal peptide directing secretion.

Belongs to the apolipoprotein C1 family.

It is found in the secreted. Inhibitor of lipoprotein binding to the low density lipoprotein (LDL) receptor, LDL receptor-related protein, and very low density lipoprotein (VLDL) receptor. Associates with high density lipoproteins (HDL) and the triacylglycerol-rich lipoproteins in the plasma and makes up about 10% of the protein of the VLDL and 2% of that of HDL. Appears to interfere directly with fatty acid uptake and is also the major plasma inhibitor of cholesteryl ester transfer protein (CETP). Binds free fatty acids and reduces their intracellular esterification. Modulates the interaction of APOE with beta-migrating VLDL and inhibits binding of beta-VLDL to the LDL receptor-related protein. The sequence is that of Apolipoprotein C-I (APOC1) from Tupaia glis (Common tree shrew).